The sequence spans 432 residues: MNTVDIGQKYKRIVEYLWDPEPKNDDDIIEPVWCLGKEYKTSIPRDSEGAEAPESCNMPGMPFLSPMNQMSLSSRDTQAALSKPATPPHQLGIQRSKSREWPTSFLDDFESKFWFTYRSNFPAIPKSRDPDTPLALTLSVRLRSQFLDTHGFTADTGWGCMIRSGQSLLANALSILNLGRDWRRGSKIKEECELLSLFADNPQAPFSIHRFVDYGASACGKHPGEWFGPSATARCIEALSNECKHTDLNVYVMSDGSDVHEDQFRQIAGPDGIRPTLILLGVRLGIESVTPVYWEALRAIIRYPQSVGIAGGRPSSSLYFIGVQGPYFFYLDPHHTRPAVSWNPDSTLSPENLDTYHTRRLRRLHIREMDPSMLIGFLIKDDDDWKDWKRRLRSVTGNPIIHIFDLERPNFGRHLEREEAVDEVEALDDDSN.

Positions 74 to 97 are disordered; it reads SRDTQAALSKPATPPHQLGIQRSK. C160 serves as the catalytic Nucleophile. Active-site residues include D332 and H334.

This sequence belongs to the peptidase C54 family.

It localises to the cytoplasm. The protein resides in the nucleus. It is found in the preautophagosomal structure. The catalysed reaction is [protein]-C-terminal L-amino acid-glycyl-phosphatidylethanolamide + H2O = [protein]-C-terminal L-amino acid-glycine + a 1,2-diacyl-sn-glycero-3-phosphoethanolamine. Its function is as follows. Cysteine protease that plays a key role in cytoplasm to vacuole transport (Cvt) and autophagy by mediating both proteolytic activation and delipidation of ATG8. Required for selective autophagic degradation of the nucleus (nucleophagy) as well as for mitophagy which contributes to regulate mitochondrial quantity and quality by eliminating the mitochondria to a basal level to fulfill cellular energy requirements and preventing excess ROS production. The protease activity is required for proteolytic activation of ATG8: cleaves the C-terminal amino acid of ATG8 to reveal a C-terminal glycine. ATG8 ubiquitin-like activity requires the exposure of the glycine at the C-terminus for its conjugation to phosphatidylethanolamine (PE) and its insertion to membranes, which is necessary for autophagy. The ATG8-PE conjugate mediates tethering between adjacent membranes and stimulates membrane hemifusion, leading to expansion of the autophagosomal membrane during autophagy. In addition to the protease activity, also catalyzes deconjugation of PE-conjugated forms of ATG8 during macroautophagy: ATG8 delipidation is required to release the protein from membranes, which facilitates multiple events during macroautophagy, and especially for efficient autophagosome biogenesis, the assembly of ATG9-containing tubulovesicular clusters into phagophores/autophagosomes, and for the disassembly of PAS-associated ATG components. ATG8 delipidation by ATG4 also recycles ATG8-PE generated on inappropriate membranes to maintain a reservoir of unlipidated ATG8 that is required for autophagosome formation at the PAS. The sequence is that of Probable cysteine protease ATG4 (ATG4) from Coccidioides immitis (strain RS) (Valley fever fungus).